Reading from the N-terminus, the 101-residue chain is MAKKSMIQRELKREKLVAKYAQKRAELKAIILDINSTEEQVWEAQIKLQKLPVNSSASRVQRRCKVTGRPHAVYRKFGLCRNKLREYAMAGDVPGLKKASW.

The protein belongs to the universal ribosomal protein uS14 family. In terms of assembly, part of the 30S ribosomal subunit. Contacts proteins S3 and S10.

In terms of biological role, binds 16S rRNA, required for the assembly of 30S particles and may also be responsible for determining the conformation of the 16S rRNA at the A site. The sequence is that of Small ribosomal subunit protein uS14 from Francisella philomiragia subsp. philomiragia (strain ATCC 25017 / CCUG 19701 / FSC 153 / O#319-036).